Reading from the N-terminus, the 217-residue chain is 3-oxo-tetronate 4-phosphate decarboxylase (217 aa).

Residues histidine 93 and histidine 95 each coordinate Zn(2+). Tyrosine 120 serves as the catalytic Proton donor.

It belongs to the aldolase class II family. AraD/FucA subfamily. Zn(2+) is required as a cofactor.

The catalysed reaction is 3-dehydro-4-O-phospho-D-erythronate + H(+) = dihydroxyacetone phosphate + CO2. It carries out the reaction 3-dehydro-4-O-phospho-L-erythronate + H(+) = dihydroxyacetone phosphate + CO2. Catalyzes the decarboxylation of 3-oxo-tetronate 4-phosphate to dihydroxyacetone phosphate (DHAP) and CO(2). This is 3-oxo-tetronate 4-phosphate decarboxylase from Cupriavidus necator (strain ATCC 17699 / DSM 428 / KCTC 22496 / NCIMB 10442 / H16 / Stanier 337) (Ralstonia eutropha).